The following is a 572-amino-acid chain: Proline--tRNA ligase (572 aa).

It belongs to the class-II aminoacyl-tRNA synthetase family. ProS type 1 subfamily. As to quaternary structure, homodimer.

It is found in the cytoplasm. The enzyme catalyses tRNA(Pro) + L-proline + ATP = L-prolyl-tRNA(Pro) + AMP + diphosphate. Catalyzes the attachment of proline to tRNA(Pro) in a two-step reaction: proline is first activated by ATP to form Pro-AMP and then transferred to the acceptor end of tRNA(Pro). As ProRS can inadvertently accommodate and process non-cognate amino acids such as alanine and cysteine, to avoid such errors it has two additional distinct editing activities against alanine. One activity is designated as 'pretransfer' editing and involves the tRNA(Pro)-independent hydrolysis of activated Ala-AMP. The other activity is designated 'posttransfer' editing and involves deacylation of mischarged Ala-tRNA(Pro). The misacylated Cys-tRNA(Pro) is not edited by ProRS. The protein is Proline--tRNA ligase of Serratia proteamaculans (strain 568).